The primary structure comprises 466 residues: Membrane-bound lytic murein transglycosylase F (466 aa).

A signal peptide spans 1-24 (MKRFKLNYFIIGLIAILLTWSLWT). The interval 25–268 (TVPWRNAHQD…RLEEKYLGHV (244 aa)) is non-LT domain. Residues 269–466 (GGFDYVDTKT…KEKKAAQLAD (198 aa)) form an LT domain region. Residue glutamate 313 is part of the active site.

In the N-terminal section; belongs to the bacterial solute-binding protein 3 family. The protein in the C-terminal section; belongs to the transglycosylase Slt family.

Its subcellular location is the cell outer membrane. The enzyme catalyses Exolytic cleavage of the (1-&gt;4)-beta-glycosidic linkage between N-acetylmuramic acid (MurNAc) and N-acetylglucosamine (GlcNAc) residues in peptidoglycan, from either the reducing or the non-reducing ends of the peptidoglycan chains, with concomitant formation of a 1,6-anhydrobond in the MurNAc residue.. Functionally, murein-degrading enzyme that degrades murein glycan strands and insoluble, high-molecular weight murein sacculi, with the concomitant formation of a 1,6-anhydromuramoyl product. Lytic transglycosylases (LTs) play an integral role in the metabolism of the peptidoglycan (PG) sacculus. Their lytic action creates space within the PG sacculus to allow for its expansion as well as for the insertion of various structures such as secretion systems and flagella. The sequence is that of Membrane-bound lytic murein transglycosylase F from Sodalis glossinidius (strain morsitans).